The primary structure comprises 598 residues: Pentatricopeptide repeat-containing protein At5g14820, mitochondrial (598 aa).

Residues 1–98 constitute a mitochondrion transit peptide; the sequence is MAAAPWLYLS…RGFSSGSSNV (98 aa). PPR repeat units follow at residues 193-227, 229-261, 262-292, 296-330, 331-365, 366-400, 401-435, 436-470, 471-505, and 506-540; these read DSRT…GLLT, ETFT…KFKI, GVET…LKER, NMMT…GLKP, DIVA…GPCP, NVRS…GLQP, DAAV…GHPP, DGKT…EIEP, SIHT…GICP, and DDNS…GMKT.

This sequence belongs to the PPR family. P subfamily.

The protein resides in the mitochondrion. This is Pentatricopeptide repeat-containing protein At5g14820, mitochondrial from Arabidopsis thaliana (Mouse-ear cress).